The primary structure comprises 190 residues: Zinc metalloproteinase/disintegrin (190 aa).

In terms of domain architecture, Peptidase M12B spans 1–11; that stretch reads NHNPECIVNEP. The Disintegrin domain occupies 19 to 105; the sequence is PPVCGNELLE…ECPADVFHKN (87 aa). Residues valine 21, asparagine 24, leucine 26, glutamate 28, glutamate 31, and aspartate 34 each coordinate Ca(2+). Disulfide bonds link cysteine 33-cysteine 51, cysteine 35-cysteine 46, cysteine 45-cysteine 68, cysteine 59-cysteine 65, cysteine 64-cysteine 90, and cysteine 77-cysteine 97. A D/ECD-tripeptide motif is present at residues 83–85; the sequence is ECD. The Ca(2+) site is built by aspartate 85, proline 86, glutamate 88, aspartate 100, and valine 101. A propeptide spanning residues 104-190 is cleaved from the precursor; it reads KNGQPCLDNY…DNSPGQNGPC (87 aa).

Belongs to the venom metalloproteinase (M12B) family. P-III subfamily. Monomer. Requires Zn(2+) as cofactor. As to expression, expressed by the venom gland.

Its subcellular location is the secreted. Impairs hemostasis in the envenomed animal. In terms of biological role, inhibits platelet aggregation induced by ADP, thrombin, platelet-activating factor and collagen. Acts by inhibiting fibrinogen interaction with platelet receptors GPIIb/GPIIIa (ITGA2B/ITGB3). This Gloydius brevicauda (Korean slamosa snake) protein is Zinc metalloproteinase/disintegrin.